The following is a 151-amino-acid chain: UPF0756 membrane protein Dred_1097 (151 aa).

Transmembrane regions (helical) follow at residues 6–26 (IILL…LATA), 52–72 (VGLI…NIVY), 75–95 (LVMK…TLAT), and 111–131 (LIFG…GIPI).

The protein belongs to the UPF0756 family.

Its subcellular location is the cell membrane. The chain is UPF0756 membrane protein Dred_1097 from Desulforamulus reducens (strain ATCC BAA-1160 / DSM 100696 / MI-1) (Desulfotomaculum reducens).